Consider the following 273-residue polypeptide: Shikimate dehydrogenase (NADP(+)) (273 aa).

Residues 14–16 and Thr-61 contribute to the shikimate site; that span reads SKS. The active-site Proton acceptor is the Lys-65. Asp-77 serves as a coordination point for NADP(+). Positions 86 and 102 each coordinate shikimate. Residues 126-130, 150-155, and Met-213 each bind NADP(+); these read GAGGA and NRTYEK. Tyr-215 serves as a coordination point for shikimate. Gly-237 provides a ligand contact to NADP(+).

Belongs to the shikimate dehydrogenase family. In terms of assembly, homodimer.

The catalysed reaction is shikimate + NADP(+) = 3-dehydroshikimate + NADPH + H(+). It functions in the pathway metabolic intermediate biosynthesis; chorismate biosynthesis; chorismate from D-erythrose 4-phosphate and phosphoenolpyruvate: step 4/7. In terms of biological role, involved in the biosynthesis of the chorismate, which leads to the biosynthesis of aromatic amino acids. Catalyzes the reversible NADPH linked reduction of 3-dehydroshikimate (DHSA) to yield shikimate (SA). The chain is Shikimate dehydrogenase (NADP(+)) from Aliivibrio salmonicida (strain LFI1238) (Vibrio salmonicida (strain LFI1238)).